We begin with the raw amino-acid sequence, 105 residues long: Nucleoid-associated protein SaurJH1_0513 (105 aa).

The disordered stretch occupies residues 1 to 33 (MRGGGNMQQMMKQMQKMQKKMAQEQKKLKEERI). The span at 7–16 (MQQMMKQMQK) shows a compositional bias: low complexity. Basic and acidic residues predominate over residues 21 to 33 (MAQEQKKLKEERI).

It belongs to the YbaB/EbfC family. In terms of assembly, homodimer.

The protein resides in the cytoplasm. It is found in the nucleoid. Binds to DNA and alters its conformation. May be involved in regulation of gene expression, nucleoid organization and DNA protection. This Staphylococcus aureus (strain JH1) protein is Nucleoid-associated protein SaurJH1_0513.